A 360-amino-acid polypeptide reads, in one-letter code: Phospho-N-acetylmuramoyl-pentapeptide-transferase (360 aa).

The next 10 membrane-spanning stretches (helical) occupy residues 25–45 (RGILGVLTALTLSLCLGPWMI), 73–93 (TMGGALILSSIGISTLLWADL), 97–117 (YVWVVLLVTLLFGAIGWVDDY), 135–155 (FWQSVFGLCAAIFLYTTAPSA), 170–190 (IPLGIGFIVLTYFVIVGSSNA), 199–219 (GLAIMPTVMVGGALGIFCYLS), 236–256 (AGELIVFSGALIGAGLGFLWF), 263–283 (VFMGDVGALALGAALGTMAVI), 288–308 (IVLFIMGGVFVMETLSVVIQV), and 338–358 (VIVRFWIITVILVLIGLATLK).

It belongs to the glycosyltransferase 4 family. MraY subfamily. Requires Mg(2+) as cofactor.

It is found in the cell inner membrane. It catalyses the reaction UDP-N-acetyl-alpha-D-muramoyl-L-alanyl-gamma-D-glutamyl-meso-2,6-diaminopimeloyl-D-alanyl-D-alanine + di-trans,octa-cis-undecaprenyl phosphate = di-trans,octa-cis-undecaprenyl diphospho-N-acetyl-alpha-D-muramoyl-L-alanyl-D-glutamyl-meso-2,6-diaminopimeloyl-D-alanyl-D-alanine + UMP. It participates in cell wall biogenesis; peptidoglycan biosynthesis. Its function is as follows. Catalyzes the initial step of the lipid cycle reactions in the biosynthesis of the cell wall peptidoglycan: transfers peptidoglycan precursor phospho-MurNAc-pentapeptide from UDP-MurNAc-pentapeptide onto the lipid carrier undecaprenyl phosphate, yielding undecaprenyl-pyrophosphoryl-MurNAc-pentapeptide, known as lipid I. The protein is Phospho-N-acetylmuramoyl-pentapeptide-transferase of Pseudomonas savastanoi pv. phaseolicola (strain 1448A / Race 6) (Pseudomonas syringae pv. phaseolicola (strain 1448A / Race 6)).